Consider the following 89-residue polypeptide: DNA-directed RNA polymerase subunit Rpo6 (89 aa).

This sequence belongs to the archaeal Rpo6/eukaryotic RPB6 RNA polymerase subunit family. In terms of assembly, part of the RNA polymerase complex.

It is found in the cytoplasm. It carries out the reaction RNA(n) + a ribonucleoside 5'-triphosphate = RNA(n+1) + diphosphate. DNA-dependent RNA polymerase (RNAP) catalyzes the transcription of DNA into RNA using the four ribonucleoside triphosphates as substrates. In Aeropyrum pernix (strain ATCC 700893 / DSM 11879 / JCM 9820 / NBRC 100138 / K1), this protein is DNA-directed RNA polymerase subunit Rpo6.